Here is an 810-residue protein sequence, read N- to C-terminus: Valine--tRNA ligase (810 aa).

The short motif at 45 to 55 is the 'HIGH' region element; the sequence is PTISGQLHIGH. The 'KMSKS' region motif lies at 534 to 538; sequence KMSKS. Residue Lys537 coordinates ATP.

This sequence belongs to the class-I aminoacyl-tRNA synthetase family. ValS type 2 subfamily. In terms of assembly, monomer.

It localises to the cytoplasm. The enzyme catalyses tRNA(Val) + L-valine + ATP = L-valyl-tRNA(Val) + AMP + diphosphate. Functionally, catalyzes the attachment of valine to tRNA(Val). As ValRS can inadvertently accommodate and process structurally similar amino acids such as threonine, to avoid such errors, it has a 'posttransfer' editing activity that hydrolyzes mischarged Thr-tRNA(Val) in a tRNA-dependent manner. The chain is Valine--tRNA ligase from Ehrlichia ruminantium (strain Welgevonden).